The following is a 591-amino-acid chain: Aspartate--tRNA(Asp/Asn) ligase (591 aa).

E174 is a binding site for L-aspartate. Positions 198–201 (QLFK) are aspartate. R220 contributes to the L-aspartate binding site. Residues 220–222 (RDE) and Q229 each bind ATP. H450 lines the L-aspartate pocket. E483 serves as a coordination point for ATP. R490 lines the L-aspartate pocket. 535-538 (GLDR) contacts ATP.

This sequence belongs to the class-II aminoacyl-tRNA synthetase family. Type 1 subfamily. Homodimer.

It localises to the cytoplasm. It carries out the reaction tRNA(Asx) + L-aspartate + ATP = L-aspartyl-tRNA(Asx) + AMP + diphosphate. In terms of biological role, aspartyl-tRNA synthetase with relaxed tRNA specificity since it is able to aspartylate not only its cognate tRNA(Asp) but also tRNA(Asn). Reaction proceeds in two steps: L-aspartate is first activated by ATP to form Asp-AMP and then transferred to the acceptor end of tRNA(Asp/Asn). The polypeptide is Aspartate--tRNA(Asp/Asn) ligase (Pseudomonas syringae pv. tomato (strain ATCC BAA-871 / DC3000)).